The sequence spans 600 residues: MRSCLWRCRHLSQGVQWSLLLAVLVFFLFALPSFIKEPQTKPSRHQRTENIKERSLQSLAKPKSQAPTRARRTTIYAEPVPENNALNTQTQPKAHTTGDRGKEANQAPPEEQDKVPHTAQRAAWKSPEKEKTMVNTLSPRGQDAGMASGRTEAQSWKSQDTKTTQGNGGQTRKLTASRTVSEKHQGKAATTAKTLIPKSQHRMLAPTGAVSTRTRQKGVTTAVIPPKEKKPQATPPPAPFQSPTTQRNQRLKAANFKSEPRWDFEEKYSFEIGGLQTTCPDSVKIKASKSLWLQKLFLPNLTLFLDSRHFNQSEWDRLEHFAPPFGFMELNYSLVQKVVTRFPPVPQQQLLLASLPAGSLRCITCAVVGNGGILNNSHMGQEIDSHDYVFRLSGALIKGYEQDVGTRTSFYGFTAFSLTQSLLILGNRGFKNVPLGKDVRYLHFLEGTRDYEWLEALLMNQTVMSKNLFWFRHRPQEAFREALHMDRYLLLHPDFLRYMKNRFLRSKTLDGAHWRIYRPTTGALLLLTALQLCDQVSAYGFITEGHERFSDHYYDTSWKRLIFYINHDFKLEREVWKRLHDEGIIRLYQRPGPGTAKAKN.

The Cytoplasmic portion of the chain corresponds to 1–14 (MRSCLWRCRHLSQG). Residues 15-35 (VQWSLLLAVLVFFLFALPSFI) form a helical; Signal-anchor for type II membrane protein membrane-spanning segment. At 36 to 600 (KEPQTKPSRH…PGPGTAKAKN (565 aa)) the chain is on the lumenal side. 2 disordered regions span residues 38 to 191 (PQTK…AATT) and 208 to 248 (GAVS…TQRN). Over residues 46 to 55 (QRTENIKERS) the composition is skewed to basic and acidic residues. Polar residues-rich tracts occupy residues 84–94 (NALNTQTQPKA), 151–179 (TEAQ…ASRT), and 209–219 (AVSTRTRQKGV). Cystine bridges form between cysteine 279-cysteine 362 and cysteine 365-cysteine 533. 5 N-linked (GlcNAc...) asparagine glycosylation sites follow: asparagine 300, asparagine 311, asparagine 331, asparagine 375, and asparagine 460.

Belongs to the glycosyltransferase 29 family. In terms of processing, glycosylated; autosialylated. In terms of tissue distribution, expression is restricted to the gastrointestinal tract. Highly expressed in goblet cells. Also expressed in various tumor cells.

The protein resides in the golgi apparatus membrane. It carries out the reaction a beta-D-galactosyl-(1-&gt;3)-N-acetyl-alpha-D-galactosaminyl derivative + CMP-N-acetyl-beta-neuraminate = a beta-D-galactosyl-(1-&gt;3)-[N-acetyl-alpha-neuraminyl-(2-&gt;6)]-N-acetyl-alpha-D-galactosaminyl derivative + CMP + H(+). The enzyme catalyses a 3-O-[N-acetyl-alpha-D-galactosaminyl]-L-seryl-[protein] + CMP-N-acetyl-beta-neuraminate = a 3-O-[N-acetyl-alpha-neuraminosyl-(2-&gt;6)-N-acetyl-alpha-D-galactosaminyl]-L-seryl-[protein] + CMP + H(+). It catalyses the reaction a 3-O-[N-acetyl-alpha-D-galactosaminyl]-L-threonyl-[protein] + CMP-N-acetyl-beta-neuraminate = a 3-O-[N-acetyl-alpha-neuraminosyl-(2-&gt;6)-N-acetyl-alpha-D-galactosaminyl]-L-threonyl-[protein] + CMP + H(+). The catalysed reaction is a 3-O-[beta-D-galactosyl-(1-&gt;3)-N-acetyl-alpha-D-galactosaminyl]-L-seryl-[protein] + CMP-N-acetyl-beta-neuraminate = a 3-O-{beta-D-galactosyl-(1-&gt;3)-[N-acetyl-alpha-neuraminosyl-(2-&gt;6)]-N-acetyl-alpha-D-galactosaminyl}-L-seryl-[protein] + CMP + H(+). It carries out the reaction a 3-O-[beta-D-galactosyl-(1-&gt;3)-N-acetyl-alpha-D-galactosaminyl]-L-threonyl-[protein] + CMP-N-acetyl-beta-neuraminate = a 3-O-{beta-D-galactosyl-(1-&gt;3)-[N-acetyl-alpha-neuraminosyl-(2-&gt;6)]-N-acetyl-alpha-D-galactosaminyl}-L-threonyl-[protein] + CMP + H(+). The enzyme catalyses a 3-O-[N-acetyl-alpha-neuraminyl-(2-&gt;3)-beta-D-galactosyl-(1-&gt;3)-N-acetyl-alpha-D-galactosaminyl]-L-threonyl-[protein] + CMP-N-acetyl-beta-neuraminate = a 3-O-{alpha-Neu5Ac-(2-&gt;3)-beta-D-Gal-(1-&gt;3)-[alpha-Neu5Ac-(2-&gt;6)]-alpha-D-GalNAc}-L-threonyl-[protein] + CMP + H(+). It functions in the pathway protein modification; protein glycosylation. Protein sialyltransferase specifically expressed in goblet cells that plays a key role in intestinal host-commensal homeostasis. Conjugates sialic acid with an alpha-2-6 linkage to N-acetylgalactosamine (GalNAc) glycan chains linked to serine or threonine in glycoproteins. Catalyzes the formation of the sialyl-Tn (S-Tn) antigen, an antigen found in intestinal goblet cells, as well as ulcerative colitis (UC) and various cancers. Protein sialylation in globlet cells is essential for mucus integrity and is required to protect the intestinal mucus against excessive bacterial proteolytic degradation. In Homo sapiens (Human), this protein is Alpha-N-acetylgalactosaminide alpha-2,6-sialyltransferase 1.